Here is a 575-residue protein sequence, read N- to C-terminus: Amino-acid acetyltransferase, mitochondrial (575 aa).

The N-terminal 35 residues, 1–35 (MSKLRNLNRQFISNLKTHETVTNAKRNLILSILKS), are a transit peptide targeting the mitochondrion. The region spanning 398–557 (FTLNNLVQDG…QGIPGGVNIH (160 aa)) is the N-acetyltransferase domain.

The protein belongs to the acetyltransferase family.

The protein localises to the mitochondrion. It carries out the reaction L-glutamate + acetyl-CoA = N-acetyl-L-glutamate + CoA + H(+). Its pathway is amino-acid biosynthesis; L-arginine biosynthesis; N(2)-acetyl-L-ornithine from L-glutamate: step 1/4. N-acetylglutamate synthase involved in arginine biosynthesis. This is Amino-acid acetyltransferase, mitochondrial (ARG2) from Debaryomyces hansenii (strain ATCC 36239 / CBS 767 / BCRC 21394 / JCM 1990 / NBRC 0083 / IGC 2968) (Yeast).